Reading from the N-terminus, the 115-residue chain is NADH-ubiquinone oxidoreductase chain 3 (115 aa).

3 helical membrane-spanning segments follow: residues 3–23, 55–75, and 84–104; these read LFVA…VAFW, FFLV…LLPL, and LSAM…GLIY.

This sequence belongs to the complex I subunit 3 family. In terms of assembly, core subunit of respiratory chain NADH dehydrogenase (Complex I) which is composed of 45 different subunits. Interacts with TMEM186. Interacts with TMEM242.

Its subcellular location is the mitochondrion inner membrane. It catalyses the reaction a ubiquinone + NADH + 5 H(+)(in) = a ubiquinol + NAD(+) + 4 H(+)(out). Core subunit of the mitochondrial membrane respiratory chain NADH dehydrogenase (Complex I) which catalyzes electron transfer from NADH through the respiratory chain, using ubiquinone as an electron acceptor. Essential for the catalytic activity of complex I. This is NADH-ubiquinone oxidoreductase chain 3 from Sigmodon hispidus (Hispid cotton rat).